We begin with the raw amino-acid sequence, 441 residues long: MSKVTPQPKIGFVSLGCPKNLVDSERILTELRTEGYDVVPSYDDADMVIVNTCGFIDSAVQESLEAIGEALNENGKVIVTGCLGAKEDQIREVHPKVLEITGPHSYEQVLEHVHHYVPKPKHNPFLSLVPEQGVKLTPRHYAYLKISEGCNHRCTFCIIPSMRGDLVSRPIGEVLSEAKRLVDAGVKEILVISQDTSAYGVDVKHRTGFHNGEPVKTSMVSLCEQLSKLGIWTRLHYVYPYPHVDDVIPLMAEGKILPYLDIPLQHASPRILKLMKRPGSVDRQLARIKQWREICPELTLRSTFIVGFPGETEEDFQMLLDFLKEARLDRVGCFKYSPVEGADANALPDQVPEEVKEERWNRFMQLQQQISAERLQEKVGREILVIIDEVDEEGAIGRSMADAPEIDGAVYLNGETNVKPGDILRVKVEHADEYDLWGSRV.

The region spanning 8-118 is the MTTase N-terminal domain; that stretch reads PKIGFVSLGC…VLEHVHHYVP (111 aa). Residues C17, C53, C82, C150, C154, and C157 each contribute to the [4Fe-4S] cluster site. One can recognise a Radical SAM core domain in the interval 136-373; it reads LTPRHYAYLK…MQLQQQISAE (238 aa). The TRAM domain maps to 376-441; that stretch reads QEKVGREILV…DEYDLWGSRV (66 aa).

It belongs to the methylthiotransferase family. RimO subfamily. [4Fe-4S] cluster is required as a cofactor.

It is found in the cytoplasm. It catalyses the reaction L-aspartate(89)-[ribosomal protein uS12]-hydrogen + (sulfur carrier)-SH + AH2 + 2 S-adenosyl-L-methionine = 3-methylsulfanyl-L-aspartate(89)-[ribosomal protein uS12]-hydrogen + (sulfur carrier)-H + 5'-deoxyadenosine + L-methionine + A + S-adenosyl-L-homocysteine + 2 H(+). In terms of biological role, catalyzes the methylthiolation of an aspartic acid residue of ribosomal protein uS12. This is Ribosomal protein uS12 methylthiotransferase RimO from Escherichia coli (strain SMS-3-5 / SECEC).